The chain runs to 250 residues: Probable transcriptional regulatory protein DP2908 (250 aa).

The protein belongs to the TACO1 family.

It localises to the cytoplasm. This is Probable transcriptional regulatory protein DP2908 from Desulfotalea psychrophila (strain LSv54 / DSM 12343).